Here is an 83-residue protein sequence, read N- to C-terminus: Cytochrome b559 subunit alpha (83 aa).

The chain crosses the membrane as a helical span at residues 21 to 35 (VIHSITIPSLFIAGW). Residue histidine 23 participates in heme binding.

The protein belongs to the PsbE/PsbF family. Heterodimer of an alpha subunit and a beta subunit. PSII is composed of 1 copy each of membrane proteins PsbA, PsbB, PsbC, PsbD, PsbE, PsbF, PsbH, PsbI, PsbJ, PsbK, PsbL, PsbM, PsbT, PsbX, PsbY, PsbZ, Psb30/Ycf12, at least 3 peripheral proteins of the oxygen-evolving complex and a large number of cofactors. It forms dimeric complexes. It depends on heme b as a cofactor.

The protein resides in the plastid. Its subcellular location is the chloroplast thylakoid membrane. Its function is as follows. This b-type cytochrome is tightly associated with the reaction center of photosystem II (PSII). PSII is a light-driven water:plastoquinone oxidoreductase that uses light energy to abstract electrons from H(2)O, generating O(2) and a proton gradient subsequently used for ATP formation. It consists of a core antenna complex that captures photons, and an electron transfer chain that converts photonic excitation into a charge separation. The polypeptide is Cytochrome b559 subunit alpha (Chaetosphaeridium globosum (Charophycean green alga)).